The primary structure comprises 1048 residues: Selenate reductase subunit A (1048 aa).

The tat-type signal signal peptide spans Met1–Ser39. A 4Fe-4S Mo/W bis-MGD-type domain is found at Glu56–Tyr129. [4Fe-4S] cluster is bound by residues Cys63, Cys66, Cys70, and Cys115. Residue Cys270 participates in Mo-bis(molybdopterin guanine dinucleotide) binding.

It belongs to the prokaryotic molybdopterin-containing oxidoreductase family. In terms of assembly, the complex is composed of three subunits: SrdA, SrdB and SrdC. [4Fe-4S] cluster serves as cofactor. Mo-bis(molybdopterin guanine dinucleotide) is required as a cofactor. In terms of processing, predicted to be exported by the Tat system. The position of the signal peptide cleavage has not been experimentally proven.

It is found in the secreted. The enzyme catalyses selenite + a quinone + H2O = selenate + a quinol. Component of the respiratory selenate reductase complex, which catalyzes the reduction of selenate to selenite. SrdA is probably the catalytic subunit that reduces selenate. This is Selenate reductase subunit A from Mesobacillus selenatarsenatis (strain DSM 18680 / JCM 14380 / FERM P-15431 / SF-1).